The sequence spans 92 residues: Large ribosomal subunit protein eL31 (92 aa).

Ser2 is modified (N-acetylserine).

It belongs to the eukaryotic ribosomal protein eL31 family. As to quaternary structure, part of the 50S ribosomal subunit.

Its function is as follows. Binds to the 23S rRNA. Located at the polypeptide exit tunnel on the outside of the subunit. The polypeptide is Large ribosomal subunit protein eL31 (rpl31e) (Haloarcula marismortui (strain ATCC 43049 / DSM 3752 / JCM 8966 / VKM B-1809) (Halobacterium marismortui)).